A 99-amino-acid chain; its full sequence is Monothiol glutaredoxin-S11 (99 aa).

The 99-residue stretch at 1–99 folds into the Glutaredoxin domain; that stretch reads MDKVMRMSSE…LVPLVKPYLC (99 aa). Cys21 is a [2Fe-2S] cluster binding site.

The protein belongs to the glutaredoxin family. CC-type subfamily.

The protein resides in the cytoplasm. May only reduce GSH-thiol disulfides, but not protein disulfides. The chain is Monothiol glutaredoxin-S11 (GRXS11) from Arabidopsis thaliana (Mouse-ear cress).